Reading from the N-terminus, the 529-residue chain is Basal body-orientation factor 1 (529 aa).

Positions 1-13 (MPSKGKDKKKGKS) are enriched in basic residues. The disordered stretch occupies residues 1-22 (MPSKGKDKKKGKSKGKDTKKLI). 2 coiled-coil regions span residues 85–201 (LKKQ…EAEK) and 271–361 (VKEK…EVER).

It belongs to the BBOF1 family. Interacts with MNS1 and ODF2.

Its subcellular location is the cytoplasm. The protein resides in the cytoskeleton. It localises to the cilium basal body. It is found in the flagellum axoneme. Functionally, plays an essential role in sperm motility and male fertility by stabilizing the sperm flagellar axonemal structure. May be required for the stability of ODF2 and MANS1 proteins. Dispensable for the assembly and function of motile cilia. This is Basal body-orientation factor 1 from Homo sapiens (Human).